We begin with the raw amino-acid sequence, 417 residues long: Serine hydroxymethyltransferase (417 aa).

Residues Leu122 and 126 to 128 (GHL) contribute to the (6S)-5,6,7,8-tetrahydrofolate site. N6-(pyridoxal phosphate)lysine is present on Lys230. 355–357 (SPF) lines the (6S)-5,6,7,8-tetrahydrofolate pocket.

This sequence belongs to the SHMT family. Homodimer. The cofactor is pyridoxal 5'-phosphate.

Its subcellular location is the cytoplasm. It catalyses the reaction (6R)-5,10-methylene-5,6,7,8-tetrahydrofolate + glycine + H2O = (6S)-5,6,7,8-tetrahydrofolate + L-serine. The protein operates within one-carbon metabolism; tetrahydrofolate interconversion. It functions in the pathway amino-acid biosynthesis; glycine biosynthesis; glycine from L-serine: step 1/1. Its function is as follows. Catalyzes the reversible interconversion of serine and glycine with tetrahydrofolate (THF) serving as the one-carbon carrier. This reaction serves as the major source of one-carbon groups required for the biosynthesis of purines, thymidylate, methionine, and other important biomolecules. Also exhibits THF-independent aldolase activity toward beta-hydroxyamino acids, producing glycine and aldehydes, via a retro-aldol mechanism. The chain is Serine hydroxymethyltransferase from Francisella tularensis subsp. holarctica (strain LVS).